Consider the following 202-residue polypeptide: B-cell CLL/lymphoma 7 protein family member B (202 aa).

The interval 53 to 202 (DSKEKEKSKS…PAVPQTASES (150 aa)) is disordered. Over residues 90-99 (ENSNQSSVSD) the composition is skewed to polar residues. Residues 107 to 123 (SSTNSSPSPQQSESLSP) are compositionally biased toward low complexity. Phosphoserine occurs at positions 114, 118, 120, 122, 127, 148, and 152.

It belongs to the BCL7 family.

Functionally, positive regulator of apoptosis. Plays a role in the Wnt signaling pathway, negatively regulating the expression of Wnt signaling components CTNNB1 and HMGA1. Involved in cell cycle progression, maintenance of the nuclear structure and stem cell differentiation. May play a role in lung tumor development or progression. The chain is B-cell CLL/lymphoma 7 protein family member B (BCL7B) from Bos taurus (Bovine).